Reading from the N-terminus, the 141-residue chain is Large ribosomal subunit protein uL11c (141 aa).

This sequence belongs to the universal ribosomal protein uL11 family. As to quaternary structure, part of the ribosomal stalk of the 50S ribosomal subunit. Interacts with L10 and the large rRNA to form the base of the stalk. L10 forms an elongated spine to which L12 dimers bind in a sequential fashion forming a multimeric L10(L12)X complex.

It localises to the plastid. The protein resides in the chloroplast. Functionally, forms part of the ribosomal stalk which helps the ribosome interact with GTP-bound translation factors. The polypeptide is Large ribosomal subunit protein uL11c (Guillardia theta (Cryptophyte)).